We begin with the raw amino-acid sequence, 95 residues long: Large ribosomal subunit protein uL23 (95 aa).

It belongs to the universal ribosomal protein uL23 family. In terms of assembly, part of the 50S ribosomal subunit. Contacts protein L29, and trigger factor when it is bound to the ribosome.

Functionally, one of the early assembly proteins it binds 23S rRNA. One of the proteins that surrounds the polypeptide exit tunnel on the outside of the ribosome. Forms the main docking site for trigger factor binding to the ribosome. The chain is Large ribosomal subunit protein uL23 from Rubrobacter xylanophilus (strain DSM 9941 / JCM 11954 / NBRC 16129 / PRD-1).